The primary structure comprises 68 residues: Large ribosomal subunit protein bL35 (68 aa).

This sequence belongs to the bacterial ribosomal protein bL35 family.

The chain is Large ribosomal subunit protein bL35 from Rickettsia conorii (strain ATCC VR-613 / Malish 7).